The chain runs to 434 residues: Putative G3BP-like protein (434 aa).

The NTF2 domain occupies I18 to F134. Disordered stretches follow at residues E141–Y180 and V274–Q308. The residue at position 145 (S145) is a Phosphoserine. Over residues A148–A157 the composition is skewed to basic and acidic residues. Positions S276–V291 are enriched in low complexity. Over residues A296–Q308 the composition is skewed to polar residues. The region spanning T315–R386 is the RRM domain. The disordered stretch occupies residues G390–N434. The segment covering F419–T428 has biased composition (basic and acidic residues).

In terms of biological role, probable scaffold protein that may be involved in mRNA transport. This is Putative G3BP-like protein (nxt3) from Schizosaccharomyces pombe (strain 972 / ATCC 24843) (Fission yeast).